Consider the following 468-residue polypeptide: Aldehyde dehydrogenase family 3 member B1 (468 aa).

M1 bears the N-acetylmethionine mark. G188–G193 lines the NAD(+) pocket. Residues E210 and C244 contribute to the active site. Residues C462 and C463 are each lipidated (S-palmitoyl cysteine). C465 is modified (cysteine methyl ester). C465 carries the S-geranylgeranyl cysteine lipid modification. The propeptide at T466 to L468 is removed in mature form.

It belongs to the aldehyde dehydrogenase family. Post-translationally, dually lipidated in the C-terminus; prenylation occurs prior to, and is a prerequisite for palmitoylation. It is also required for activity towards long-chain substrates. Highly expressed in kidney and liver. In brain is expressed at moderate levels in cortex, striatum and hippocampus, and at lower levels in brainstem and cerebellum.

It is found in the cell membrane. It catalyses the reaction an aldehyde + NAD(+) + H2O = a carboxylate + NADH + 2 H(+). It carries out the reaction a long-chain fatty aldehyde + NAD(+) + H2O = a long-chain fatty acid + NADH + 2 H(+). The enzyme catalyses a medium-chain fatty aldehyde + NAD(+) + H2O = a medium-chain fatty acid + NADH + 2 H(+). The catalysed reaction is octanal + NAD(+) + H2O = octanoate + NADH + 2 H(+). It catalyses the reaction nonanal + NAD(+) + H2O = nonanoate + NADH + 2 H(+). It carries out the reaction hexadecanoate + NADH + 2 H(+) = hexadecanal + NAD(+) + H2O. The enzyme catalyses (2E)-octenal + NAD(+) + H2O = (2E)-octenoate + NADH + 2 H(+). The catalysed reaction is (E)-non-2-enal + NAD(+) + H2O = (E)-non-2-enoate + NADH + 2 H(+). It catalyses the reaction (E)-4-hydroxynon-2-enal + NAD(+) + H2O = (E)-4-hydroxynon-2-enoate + NADH + 2 H(+). It carries out the reaction (2E)-hexadecenal + NAD(+) + H2O = (E)-hexadec-2-enoate + NADH + 2 H(+). The enzyme catalyses benzaldehyde + NAD(+) + H2O = benzoate + NADH + 2 H(+). The catalysed reaction is an aldehyde + NADP(+) + H2O = a carboxylate + NADPH + 2 H(+). It catalyses the reaction a medium-chain fatty aldehyde + NADP(+) + H2O = a medium-chain fatty acid + NADPH + 2 H(+). It carries out the reaction hexanal + NADP(+) + H2O = hexanoate + NADPH + 2 H(+). The enzyme catalyses octanal + NADP(+) + H2O = octanoate + NADPH + 2 H(+). The catalysed reaction is nonanal + NADP(+) + H2O = nonanoate + NADPH + 2 H(+). It catalyses the reaction (2E)-octenal + NADP(+) + H2O = (2E)-octenoate + NADPH + 2 H(+). It carries out the reaction (E)-non-2-enal + NADP(+) + H2O = (E)-non-2-enoate + NADPH + 2 H(+). The enzyme catalyses (E)-4-hydroxynon-2-enal + NADP(+) + H2O = (E)-4-hydroxynon-2-enoate + NADPH + 2 H(+). The catalysed reaction is benzaldehyde + NADP(+) + H2O = benzoate + NADPH + 2 H(+). It participates in alcohol metabolism; ethanol degradation; acetate from ethanol: step 2/2. Functionally, oxidizes medium and long chain saturated and unsaturated fatty aldehydes generated in the plasma membrane into non-toxic fatty acids. May have a protective role against the cytotoxicity induced by lipid peroxidation. Short-chain fatty aldehydes are not good substrates. Can use both NADP(+) and NAD(+) as electron acceptor in vitro, however in vivo preference will depend on their tissue levels. Low activity towards acetaldehyde and 3,4-dihydroxyphenylacetaldehyde. Able to metabolize aromatic aldehydes such as benzaldehyde to their acid form. This Mus musculus (Mouse) protein is Aldehyde dehydrogenase family 3 member B1 (Aldh3b1).